Reading from the N-terminus, the 709-residue chain is Tyrosine-protein phosphatase cdc-14 (709 aa).

The region spanning 196–354 is the Tyrosine-protein phosphatase domain; the sequence is DFNWIIPGKI…QKFCWSLSQS (159 aa). Residue C295 is the Phosphocysteine intermediate of the active site. The Nuclear localization signal signature appears at 366-371; it reads KRNVRR. The Nuclear export signal signature appears at 372–381; it reads LVNQVDDINL. 3 disordered regions span residues 403–541, 573–594, and 628–661; these read VQVQ…LTRT, RYLS…GTSP, and ESKP…PYPS. Over residues 404-413 the composition is skewed to polar residues; it reads QVQNGRSTAP. A compositionally biased stretch (low complexity) spans 463–479; sequence TTSPNSSSSRRFVKSST. 2 stretches are compositionally biased toward polar residues: residues 480 to 490 and 501 to 521; these read PQMTVPSQAYL and PSKN…TPNG. The segment covering 526–541 has biased composition (low complexity); sequence RTRNSSGNTTSTLTRT. The span at 639–649 shows a compositional bias: polar residues; the sequence is PGTSKSTSSLK.

Belongs to the protein-tyrosine phosphatase family. Non-receptor class CDC14 subfamily.

Its subcellular location is the cytoplasm. The protein resides in the cytoskeleton. It localises to the microtubule organizing center. It is found in the centrosome. The protein localises to the spindle. Its subcellular location is the midbody. The protein resides in the nucleus. The catalysed reaction is O-phospho-L-tyrosyl-[protein] + H2O = L-tyrosyl-[protein] + phosphate. With respect to regulation, inhibited by sodium orthovanadate. Weakly inhibited by sodium fluoride and okadaic acid. Its function is as follows. Protein phosphatase that negatively regulates the G1-to-S phase transition to inhibit the cell cycle and establish quiescence in cells of multiple lineages including vulval, hypodermal and intestinal. Promotes nuclear accumulation and activity of the cyclin-dependent kinase inhibitor cki-1 which leads to inhibition of G1 progression during vulval tissue development. Has been shown to not be required for cytokinesis. However, in the embryo, in a contrasting study, has been shown to act as a regulator of central spindle formation and cytokinesis, and may be required for localization of the spindle component zen-4, and its interacting partner air-2 at the spindle during late cell divisions. In terms of biological role, main regulator of cell cycle arrest in vulval precursor cells. The chain is Tyrosine-protein phosphatase cdc-14 from Caenorhabditis elegans.